The sequence spans 491 residues: Protein nucleotidyltransferase YdiU (491 aa).

ATP-binding residues include Gly-94, Gly-96, Arg-97, Lys-117, Asp-129, Gly-130, Arg-180, and Arg-187. Residue Asp-256 is the Proton acceptor of the active site. Residues Asn-257 and Asp-266 each contribute to the Mg(2+) site. Position 266 (Asp-266) interacts with ATP.

The protein belongs to the SELO family. Mg(2+) is required as a cofactor. Requires Mn(2+) as cofactor.

The enzyme catalyses L-seryl-[protein] + ATP = 3-O-(5'-adenylyl)-L-seryl-[protein] + diphosphate. It catalyses the reaction L-threonyl-[protein] + ATP = 3-O-(5'-adenylyl)-L-threonyl-[protein] + diphosphate. It carries out the reaction L-tyrosyl-[protein] + ATP = O-(5'-adenylyl)-L-tyrosyl-[protein] + diphosphate. The catalysed reaction is L-histidyl-[protein] + UTP = N(tele)-(5'-uridylyl)-L-histidyl-[protein] + diphosphate. The enzyme catalyses L-seryl-[protein] + UTP = O-(5'-uridylyl)-L-seryl-[protein] + diphosphate. It catalyses the reaction L-tyrosyl-[protein] + UTP = O-(5'-uridylyl)-L-tyrosyl-[protein] + diphosphate. Nucleotidyltransferase involved in the post-translational modification of proteins. It can catalyze the addition of adenosine monophosphate (AMP) or uridine monophosphate (UMP) to a protein, resulting in modifications known as AMPylation and UMPylation. This Alkaliphilus metalliredigens (strain QYMF) protein is Protein nucleotidyltransferase YdiU.